The primary structure comprises 208 residues: Thymidylate kinase (208 aa).

Residue 7-14 (GIDGAGKT) participates in ATP binding.

It belongs to the thymidylate kinase family.

The enzyme catalyses dTMP + ATP = dTDP + ADP. Phosphorylation of dTMP to form dTDP in both de novo and salvage pathways of dTTP synthesis. In Xylella fastidiosa (strain 9a5c), this protein is Thymidylate kinase (tmk).